The sequence spans 147 residues: 3-dehydroquinate dehydratase (147 aa).

The active-site Proton acceptor is tyrosine 23. 3 residues coordinate substrate: asparagine 75, histidine 81, and aspartate 88. Histidine 101 acts as the Proton donor in catalysis. Residues 102–103 and arginine 112 each bind substrate; that span reads LS.

This sequence belongs to the type-II 3-dehydroquinase family. As to quaternary structure, homododecamer.

It carries out the reaction 3-dehydroquinate = 3-dehydroshikimate + H2O. It functions in the pathway metabolic intermediate biosynthesis; chorismate biosynthesis; chorismate from D-erythrose 4-phosphate and phosphoenolpyruvate: step 3/7. Functionally, catalyzes a trans-dehydration via an enolate intermediate. This is 3-dehydroquinate dehydratase from Thioalkalivibrio sulfidiphilus (strain HL-EbGR7).